Consider the following 262-residue polypeptide: Pyridoxine 5'-phosphate synthase (262 aa).

Residue Asn6 participates in 3-amino-2-oxopropyl phosphate binding. Residue 8 to 9 (DH) coordinates 1-deoxy-D-xylulose 5-phosphate. Arg17 serves as a coordination point for 3-amino-2-oxopropyl phosphate. The Proton acceptor role is filled by His43. Arg45 and His50 together coordinate 1-deoxy-D-xylulose 5-phosphate. Glu70 (proton acceptor) is an active-site residue. Position 102 (Thr102) interacts with 1-deoxy-D-xylulose 5-phosphate. His215 serves as the catalytic Proton donor. 3-amino-2-oxopropyl phosphate is bound by residues Gly216 and 237 to 238 (GH).

The protein belongs to the PNP synthase family. In terms of assembly, homooctamer; tetramer of dimers.

It localises to the cytoplasm. The enzyme catalyses 3-amino-2-oxopropyl phosphate + 1-deoxy-D-xylulose 5-phosphate = pyridoxine 5'-phosphate + phosphate + 2 H2O + H(+). Its pathway is cofactor biosynthesis; pyridoxine 5'-phosphate biosynthesis; pyridoxine 5'-phosphate from D-erythrose 4-phosphate: step 5/5. In terms of biological role, catalyzes the complicated ring closure reaction between the two acyclic compounds 1-deoxy-D-xylulose-5-phosphate (DXP) and 3-amino-2-oxopropyl phosphate (1-amino-acetone-3-phosphate or AAP) to form pyridoxine 5'-phosphate (PNP) and inorganic phosphate. In Helicobacter pylori (strain Shi470), this protein is Pyridoxine 5'-phosphate synthase.